A 317-amino-acid chain; its full sequence is Transmembrane and death domain protein 1 (317 aa).

A signal peptide spans 1-27 (MAARTLASALVLTLWVWALAPAGAVDA). Topologically, residues 28–218 (MGPHAAVRLA…ERSPMGWAGP (191 aa)) are extracellular. The segment covering 62 to 73 (ELSRLSEDRLAR) has biased composition (basic and acidic residues). Residues 62 to 106 (ELSRLSEDRLARPEPLNTTSGSPSRRRRREAAEDPAGRVAGPGEV) are disordered. Residues 66–150 (LSEDRLARPE…DVARELGKNL (85 aa)) form the Death domain. Residue Asn78 is glycosylated (N-linked (GlcNAc...) asparagine). Residues 219–239 (LALGLLTGFVGALGTGALVVL) form a helical membrane-spanning segment. The Cytoplasmic portion of the chain corresponds to 240–317 (LTLWITGGDG…SWGSGALDGL (78 aa)).

It is found in the membrane. In Homo sapiens (Human), this protein is Transmembrane and death domain protein 1.